Reading from the N-terminus, the 177-residue chain is Decaprenylphosphoryl-5-phosphoribose phosphatase (177 aa).

4 consecutive transmembrane segments (helical) span residues 35–55 (HFGE…IALP), 62–82 (LVAG…KRLV), 124–144 (GLPL…LLGV), and 150–170 (VAVG…VGGG).

The protein belongs to the PA-phosphatase related phosphoesterase family.

The protein resides in the cell membrane. It carries out the reaction trans,octa-cis-decaprenylphospho-beta-D-ribofuranose 5-phosphate + H2O = trans,octa-cis-decaprenylphospho-beta-D-ribofuranose + phosphate. It participates in cell wall biogenesis; cell wall polysaccharide biosynthesis. Phosphatase involved in the biosynthesis of decaprenylphosphoryl arabinose (DPA), which serves as the arabinose donor for the biosynthesis of arabinogalactan, the major mycobacterial cell wall polysaccharide. Catalyzes the dephosphorylation of decaprenylphosphoryl-5-phosphoribose (DPPR) to decaprenyl-phosphoribose (DPR). The sequence is that of Decaprenylphosphoryl-5-phosphoribose phosphatase from Mycobacterium tuberculosis (strain CDC 1551 / Oshkosh).